The sequence spans 67 residues: MFGLGGQELVLILLIVLLLFGAQKLPELAKGLGKGIKEFKKAQNEIEEEFNKATDDSSSKEKKETKA.

The helical transmembrane segment at 1-21 (MFGLGGQELVLILLIVLLLFG) threads the bilayer.

This sequence belongs to the TatA/E family. As to quaternary structure, forms a complex with TatC.

It localises to the cell inner membrane. Its function is as follows. Part of the twin-arginine translocation (Tat) system that transports large folded proteins containing a characteristic twin-arginine motif in their signal peptide across membranes. TatA could form the protein-conducting channel of the Tat system. In Chlorobaculum tepidum (strain ATCC 49652 / DSM 12025 / NBRC 103806 / TLS) (Chlorobium tepidum), this protein is Sec-independent protein translocase protein TatA.